The sequence spans 87 residues: Acyl-CoA-binding protein (87 aa).

The residue at position 2 (Ser-2) is an N-acetylserine. The 86-residue stretch at 2 to 87 folds into the ACB domain; it reads SQAEFEKAAE…VEELKQKYGI (86 aa). Lys-8 is modified (N6-acetyllysine; alternate). Lys-8 is subject to N6-succinyllysine; alternate. Lys-14 contacts an acyl-CoA. At Lys-17 the chain carries N6-succinyllysine. Position 19 is an N6-acetyllysine (Lys-19). The residue at position 29 (Tyr-29) is a Phosphotyrosine. An acyl-CoA contacts are provided by residues 29–33, Lys-51, Lys-55, and Tyr-74; that span reads YSHYK. Lys-51 carries the N6-acetyllysine modification. The residue at position 55 (Lys-55) is an N6-acetyllysine; alternate. Position 55 is an N6-succinyllysine; alternate (Lys-55). Residue Lys-55 is modified to N6-(2-hydroxyisobutyryl)lysine; alternate. Lys-55 bears the N6-malonyllysine; alternate mark. Lys-77 bears the N6-acetyllysine; alternate mark. Lys-77 carries the post-translational modification N6-succinyllysine; alternate.

It belongs to the ACBP family. Monomer.

Its subcellular location is the endoplasmic reticulum. It localises to the golgi apparatus. In terms of biological role, binds medium- and long-chain acyl-CoA esters with very high affinity and may function as an intracellular carrier of acyl-CoA esters. It is also able to displace diazepam from the benzodiazepine (BZD) recognition site located on the GABA type A receptor. It is therefore possible that this protein also acts as a neuropeptide to modulate the action of the GABA receptor. The sequence is that of Acyl-CoA-binding protein (DBI) from Oryctolagus cuniculus (Rabbit).